The sequence spans 843 residues: Pullulanase (843 aa).

The first 19 residues, 1-19 (MKTKLWLLLVLLLSALIFS), serve as a signal peptide directing secretion. The active-site Nucleophile is aspartate 535. Glutamate 564 serves as the catalytic Proton donor.

The protein belongs to the glycosyl hydrolase 13 family.

It catalyses the reaction Hydrolysis of (1-&gt;6)-alpha-D-glucosidic linkages in pullulan, amylopectin and glycogen, and in the alpha- and beta-limit dextrins of amylopectin and glycogen.. The sequence is that of Pullulanase (pulA) from Thermotoga maritima (strain ATCC 43589 / DSM 3109 / JCM 10099 / NBRC 100826 / MSB8).